The chain runs to 212 residues: Large ribosomal subunit protein uL3 (212 aa).

The disordered stretch occupies residues 129-156 (RRGPMGHGSKNHRAPGSTGAGTTPGRIY). Residues 142–153 (APGSTGAGTTPG) are compositionally biased toward low complexity.

This sequence belongs to the universal ribosomal protein uL3 family. In terms of assembly, part of the 50S ribosomal subunit. Forms a cluster with proteins L14 and L19.

Functionally, one of the primary rRNA binding proteins, it binds directly near the 3'-end of the 23S rRNA, where it nucleates assembly of the 50S subunit. This is Large ribosomal subunit protein uL3 from Acaryochloris marina (strain MBIC 11017).